A 151-amino-acid chain; its full sequence is MMKEMRKKPHVLIVEARFYEKISDALLKGAVSALQKAEASYDTITVPGALEIPAAIAFAEQNKISYDGYVALGCVIRGETYHFEIVANDSCRALMDLTVHKRLAIGNGILTVENEEQAWERAKQDDKNKGGFAAEAALCMIALKKRFGDNR.

5-amino-6-(D-ribitylamino)uracil-binding positions include Phe18, 49–51 (ALE), and 74–76 (CVI). A (2S)-2-hydroxy-3-oxobutyl phosphate-binding site is contributed by 79–80 (ET). His82 acts as the Proton donor in catalysis. Asn107 lines the 5-amino-6-(D-ribitylamino)uracil pocket. Arg121 contacts (2S)-2-hydroxy-3-oxobutyl phosphate.

The protein belongs to the DMRL synthase family.

The catalysed reaction is (2S)-2-hydroxy-3-oxobutyl phosphate + 5-amino-6-(D-ribitylamino)uracil = 6,7-dimethyl-8-(1-D-ribityl)lumazine + phosphate + 2 H2O + H(+). It functions in the pathway cofactor biosynthesis; riboflavin biosynthesis; riboflavin from 2-hydroxy-3-oxobutyl phosphate and 5-amino-6-(D-ribitylamino)uracil: step 1/2. Functionally, catalyzes the formation of 6,7-dimethyl-8-ribityllumazine by condensation of 5-amino-6-(D-ribitylamino)uracil with 3,4-dihydroxy-2-butanone 4-phosphate. This is the penultimate step in the biosynthesis of riboflavin. This is 6,7-dimethyl-8-ribityllumazine synthase from Bartonella tribocorum (strain CIP 105476 / IBS 506).